Reading from the N-terminus, the 478-residue chain is Lysosome membrane protein 2 (478 aa).

At 2–4 (ARC) the chain is on the cytoplasmic side. The chain crosses the membrane as a helical span at residues 5-27 (CFYTAGTLSLLLLVTSVTLLVAR). At 28-433 (VFQKAVDQTI…QLKSVINTTL (406 aa)) the chain is on the lumenal side. Asn-45, Asn-68, Asn-105, and Asn-122 each carry an N-linked (GlcNAc...) asparagine glycan. An important for interaction with GBA1 region spans residues 155–191 (IIEAMLKAYQQTLFVTHTVHELLWGYKDEVLSLVHIF). N-linked (GlcNAc...) asparagine glycosylation is found at Asn-206, Asn-224, Asn-249, and Asn-304. 2 disulfide bridges follow: Cys-274–Cys-329 and Cys-312–Cys-318. Asn-325, Asn-412, and Asn-430 each carry an N-linked (GlcNAc...) asparagine glycan. A helical membrane pass occupies residues 434-459 (IVTNIPYIIMALGVFFGLIFTWLACR). At 460-478 (GQGSTDEGTADERAPLIRT) the chain is on the cytoplasmic side.

Belongs to the CD36 family. In terms of assembly, interacts with GBA1. Acylated by palmitic acid group(s).

It is found in the lysosome membrane. Functionally, acts as a lysosomal receptor for glucosylceramidase (GBA1) targeting. In Rattus norvegicus (Rat), this protein is Lysosome membrane protein 2 (Scarb2).